Here is a 261-residue protein sequence, read N- to C-terminus: Triosephosphate isomerase (261 aa).

D-glyceraldehyde 3-phosphate is bound by residues Asn-11 and Lys-13. The active-site Electrophile is His-102. Residue Glu-174 is the Proton acceptor of the active site. D-glyceraldehyde 3-phosphate-binding residues include Gly-180, Leu-239, and Gly-241.

This sequence belongs to the triosephosphate isomerase family. In terms of assembly, homodimer.

The catalysed reaction is D-glyceraldehyde 3-phosphate = dihydroxyacetone phosphate. The protein operates within carbohydrate biosynthesis; gluconeogenesis. Its pathway is carbohydrate degradation; glycolysis; D-glyceraldehyde 3-phosphate from glycerone phosphate: step 1/1. Catalyzes the interconversion of glyceraldehyde 3-phosphate and dihydroxyacetone phosphate in the glycolytic and gluconeogenic pathways. The polypeptide is Triosephosphate isomerase (Entamoeba histolytica (strain ATCC 30459 / HM-1:IMSS / ABRM)).